Consider the following 1332-residue polypeptide: Abscisic-aldehyde oxidase (1332 aa).

Residues 1 to 88 (MDLEFAVNGE…GCSITTSEGL (88 aa)) enclose the 2Fe-2S ferredoxin-type domain. Residues cysteine 40, cysteine 45, and cysteine 48 each contribute to the [2Fe-2S] cluster site. An FAD-binding PCMH-type domain is found at 219–400 (SDHLKYRWTT…LKVEIPSWTA (182 aa)).

Belongs to the xanthine dehydrogenase family. Aldehyde oxidases (AO) are homodimers and heterodimers of AO subunits. AO-delta is a AAO3 homodimer. AAO3 also forms a dimer with AAO2. Interacts with PUB44, and this interaction probably results in targeting of this protein to the proteasome. Requires [2Fe-2S] cluster as cofactor. The cofactor is FAD. Mo-molybdopterin serves as cofactor. In terms of tissue distribution, expressed in vascular tissues of all organs, particularly in phloem companion cells and xylem parenchymatic cells. Highly expressed in roots and rosettes, and to lower extent in seedlings, stems and flowers. Expressed at very low levels in siliques and dry seeds. Also detected in root dividing cells (tips and primordia), in mesophyll cells and inside the guard cells.

The protein resides in the cytoplasm. The catalysed reaction is 2-cis-(+)-abscisic aldehyde + O2 + H2O = 2-cis-(+)-abscisate + H2O2 + H(+). It carries out the reaction 1-naphthaldehyde + O2 + H2O = 1-naphthoate + H2O2 + H(+). The enzyme catalyses indole-3-acetaldehyde + O2 + H2O = (indol-3-yl)acetate + H2O2 + H(+). In higher plants aldehyde oxidases (AO) appear to be homo- and heterodimeric assemblies of AO subunits with probably different physiological functions. AO-delta may be involved in the last step of abscisic acid biosynthesis, at least in leaves and seeds. In vitro, AO-delta oxidizes abscisic aldehyde to abscisic acid (ABA). In vitro, AO-delta also uses 1-naphthaldehyde, indole-3-aldehyde (IAld), benzaldehyde and cinnamaldehyde as substrate; the AAO2-AAO3 dimer also uses abscisic aldehyde as substrate. This is Abscisic-aldehyde oxidase (AAO3) from Arabidopsis thaliana (Mouse-ear cress).